The primary structure comprises 335 residues: MVPTVDMGIPGASVSSRSVADRPNRKRVLLAEPRGYCAGVDRAVETVERALQKHGPPVYVRHEIVHNRHVVDTLAKAGAVFVEETEQVPEGAIVVFSAHGVAPTVHVSASERNLQVIDATCPLVTKVHNEARRFARDDYDILLIGHEGHEEVVGTAGEAPDHVQLVDGVDAVDQVTVRDEDKVVWLSQTTLSVDETMEIVGRLRRRFPKLQDPPSDDICYATQNRQVAVKAMAPECELVIVVGSRNSSNSVRLVEVALGAGARAAHLVDWADDIDSAWLDGVTTVGVTSGASVPEVLVRGVLERLAECGYDIVQPVTTANETLVFALPRELRSPR.

C37 serves as a coordination point for [4Fe-4S] cluster. H66 and H99 together coordinate (2E)-4-hydroxy-3-methylbut-2-enyl diphosphate. 2 residues coordinate dimethylallyl diphosphate: H66 and H99. H66 and H99 together coordinate isopentenyl diphosphate. Residue C121 coordinates [4Fe-4S] cluster. H149 provides a ligand contact to (2E)-4-hydroxy-3-methylbut-2-enyl diphosphate. Position 149 (H149) interacts with dimethylallyl diphosphate. H149 contributes to the isopentenyl diphosphate binding site. The active-site Proton donor is the E151. T189 contributes to the (2E)-4-hydroxy-3-methylbut-2-enyl diphosphate binding site. A [4Fe-4S] cluster-binding site is contributed by C219. Positions 247, 248, 249, and 292 each coordinate (2E)-4-hydroxy-3-methylbut-2-enyl diphosphate. Residues S247, S248, N249, and S292 each contribute to the dimethylallyl diphosphate site. 4 residues coordinate isopentenyl diphosphate: S247, S248, N249, and S292.

It belongs to the IspH family. Requires [4Fe-4S] cluster as cofactor.

The enzyme catalyses isopentenyl diphosphate + 2 oxidized [2Fe-2S]-[ferredoxin] + H2O = (2E)-4-hydroxy-3-methylbut-2-enyl diphosphate + 2 reduced [2Fe-2S]-[ferredoxin] + 2 H(+). It catalyses the reaction dimethylallyl diphosphate + 2 oxidized [2Fe-2S]-[ferredoxin] + H2O = (2E)-4-hydroxy-3-methylbut-2-enyl diphosphate + 2 reduced [2Fe-2S]-[ferredoxin] + 2 H(+). The protein operates within isoprenoid biosynthesis; dimethylallyl diphosphate biosynthesis; dimethylallyl diphosphate from (2E)-4-hydroxy-3-methylbutenyl diphosphate: step 1/1. It participates in isoprenoid biosynthesis; isopentenyl diphosphate biosynthesis via DXP pathway; isopentenyl diphosphate from 1-deoxy-D-xylulose 5-phosphate: step 6/6. Catalyzes the conversion of 1-hydroxy-2-methyl-2-(E)-butenyl 4-diphosphate (HMBPP) into a mixture of isopentenyl diphosphate (IPP) and dimethylallyl diphosphate (DMAPP). Acts in the terminal step of the DOXP/MEP pathway for isoprenoid precursor biosynthesis. Has a higher activity compared with LytB2. Is essential for M.tuberculosis growth in vitro. The chain is 4-hydroxy-3-methylbut-2-enyl diphosphate reductase 2 from Mycobacterium tuberculosis (strain ATCC 25618 / H37Rv).